Here is a 219-residue protein sequence, read N- to C-terminus: Large ribosomal subunit protein uL3 (219 aa).

Positions 133-153 (GRASHGNSRSHNVPGSIGMAQ) are disordered. The residue at position 153 (glutamine 153) is an N5-methylglutamine.

It belongs to the universal ribosomal protein uL3 family. Part of the 50S ribosomal subunit. Forms a cluster with proteins L14 and L19. In terms of processing, methylated by PrmB.

Its function is as follows. One of the primary rRNA binding proteins, it binds directly near the 3'-end of the 23S rRNA, where it nucleates assembly of the 50S subunit. The protein is Large ribosomal subunit protein uL3 of Burkholderia mallei (strain NCTC 10247).